The following is a 431-amino-acid chain: Adenylosuccinate synthetase (431 aa).

Residues 13–19 (GDEGKGK) and 41–43 (GHT) contribute to the GTP site. D14 serves as the catalytic Proton acceptor. Mg(2+) is bound by residues D14 and G41. IMP-binding positions include 14 to 17 (DEGK), 39 to 42 (NAGH), T130, R144, Q225, T240, and R304. H42 acts as the Proton donor in catalysis. 300–306 (ATTGRKR) contributes to the substrate binding site. GTP contacts are provided by residues R306, 332 to 334 (KLD), and 415 to 417 (STG).

Belongs to the adenylosuccinate synthetase family. In terms of assembly, homodimer. The cofactor is Mg(2+).

Its subcellular location is the cytoplasm. It carries out the reaction IMP + L-aspartate + GTP = N(6)-(1,2-dicarboxyethyl)-AMP + GDP + phosphate + 2 H(+). The protein operates within purine metabolism; AMP biosynthesis via de novo pathway; AMP from IMP: step 1/2. Functionally, plays an important role in the de novo pathway of purine nucleotide biosynthesis. Catalyzes the first committed step in the biosynthesis of AMP from IMP. In Shewanella denitrificans (strain OS217 / ATCC BAA-1090 / DSM 15013), this protein is Adenylosuccinate synthetase.